A 681-amino-acid polypeptide reads, in one-letter code: NAD(P)H-quinone oxidoreductase chain 5 (681 aa).

The next 16 helical transmembrane spans lie at 7–27 (LAWL…IGLI), 39–59 (INAV…GALL), 89–109 (IDHL…LVMI), 120–140 (GYVR…GLVI), 144–164 (LVQV…LIGF), 188–208 (GLLL…FGTI), 219–239 (GVLS…GPVA), 258–278 (TPIS…FLVA), 289–309 (VVMN…ATIA), 327–347 (LGYM…FHLM), 352–372 (FKAM…GVVG), 395–415 (ATCF…AGFW), 420–440 (ILGL…ATAG), 509–529 (LTMT…GLLG), 558–578 (FYVM…VASL), and 660–680 (AQFY…VFSL).

This sequence belongs to the complex I subunit 5 family.

It is found in the cell membrane. The catalysed reaction is a plastoquinone + NADH + (n+1) H(+)(in) = a plastoquinol + NAD(+) + n H(+)(out). It catalyses the reaction a plastoquinone + NADPH + (n+1) H(+)(in) = a plastoquinol + NADP(+) + n H(+)(out). In terms of biological role, NDH-1 shuttles electrons from NAD(P)H, via FMN and iron-sulfur (Fe-S) centers, to quinones in the respiratory chain. The immediate electron acceptor for the enzyme in this species is believed to be plastoquinone. Couples the redox reaction to proton translocation (for every two electrons transferred, four hydrogen ions are translocated across the cytoplasmic membrane), and thus conserves the redox energy in a proton gradient. The sequence is that of NAD(P)H-quinone oxidoreductase chain 5 (ndhF) from Synechocystis sp. (strain ATCC 27184 / PCC 6803 / Kazusa).